Here is a 97-residue protein sequence, read N- to C-terminus: Coiled-coil domain-containing protein 167 (97 aa).

A coiled-coil region spans residues 36 to 80 (LRKMELTEEGRKSLEKEKSSLSSRLSNYERELKSLRHENRKNMLL). Residues 78–95 (MLLSVAIFLLFAVGYYCW) traverse the membrane as a helical segment.

Its subcellular location is the membrane. The protein is Coiled-coil domain-containing protein 167 (ccdc167) of Xenopus tropicalis (Western clawed frog).